We begin with the raw amino-acid sequence, 1224 residues long: DNA-directed RNA polymerase subunit beta'' (1224 aa).

Zn(2+) is bound by residues cysteine 223, cysteine 297, cysteine 304, and cysteine 307.

The protein belongs to the RNA polymerase beta' chain family. RpoC2 subfamily. As to quaternary structure, in plastids the minimal PEP RNA polymerase catalytic core is composed of four subunits: alpha, beta, beta', and beta''. When a (nuclear-encoded) sigma factor is associated with the core the holoenzyme is formed, which can initiate transcription. It depends on Zn(2+) as a cofactor.

The protein resides in the plastid. Its subcellular location is the chloroplast. The catalysed reaction is RNA(n) + a ribonucleoside 5'-triphosphate = RNA(n+1) + diphosphate. Its function is as follows. DNA-dependent RNA polymerase catalyzes the transcription of DNA into RNA using the four ribonucleoside triphosphates as substrates. The polypeptide is DNA-directed RNA polymerase subunit beta'' (Porphyra purpurea (Red seaweed)).